A 159-amino-acid polypeptide reads, in one-letter code: Cytochrome c-type biogenesis protein CcmE (159 aa).

Over 1–8 (MNPRRKTR) the chain is Cytoplasmic. Residues 9 to 29 (LWVALTVLAGLGLTMALVLYA) traverse the membrane as a helical; Signal-anchor for type II membrane protein segment. Over 30–159 (LRANIDLFYT…PPQAYKDNRP (130 aa)) the chain is Periplasmic. Histidine 130 and tyrosine 134 together coordinate heme. The segment at 130 to 159 (HDENYTPPEVKAAMDANHTRPPQAYKDNRP) is disordered.

Belongs to the CcmE/CycJ family.

It localises to the cell inner membrane. In terms of biological role, heme chaperone required for the biogenesis of c-type cytochromes. Transiently binds heme delivered by CcmC and transfers the heme to apo-cytochromes in a process facilitated by CcmF and CcmH. This chain is Cytochrome c-type biogenesis protein CcmE, found in Cronobacter sakazakii (strain ATCC BAA-894) (Enterobacter sakazakii).